The primary structure comprises 286 residues: Thymidylate synthase (286 aa).

140–141 is a binding site for dUMP; the sequence is RR. The active-site Nucleophile is the Cys-161. DUMP-binding positions include 185–188, Asn-196, and 226–228; these read RSND and HIY. Residue Asp-188 coordinates (6R)-5,10-methylene-5,6,7,8-tetrahydrofolate. Ala-285 contributes to the (6R)-5,10-methylene-5,6,7,8-tetrahydrofolate binding site.

It belongs to the thymidylate synthase family. Bacterial-type ThyA subfamily. Homodimer.

It localises to the cytoplasm. The enzyme catalyses dUMP + (6R)-5,10-methylene-5,6,7,8-tetrahydrofolate = 7,8-dihydrofolate + dTMP. It participates in pyrimidine metabolism; dTTP biosynthesis. Functionally, catalyzes the reductive methylation of 2'-deoxyuridine-5'-monophosphate (dUMP) to 2'-deoxythymidine-5'-monophosphate (dTMP) while utilizing 5,10-methylenetetrahydrofolate (mTHF) as the methyl donor and reductant in the reaction, yielding dihydrofolate (DHF) as a by-product. This enzymatic reaction provides an intracellular de novo source of dTMP, an essential precursor for DNA biosynthesis. The sequence is that of Thymidylate synthase from Streptococcus thermophilus (strain ATCC BAA-250 / LMG 18311).